Consider the following 332-residue polypeptide: Oxygen-dependent coproporphyrinogen-III oxidase (332 aa).

Ser119 serves as a coordination point for coproporphyrinogen III. Residue His133 is the Proton donor of the active site. Coproporphyrinogen III is bound by residues 135–137 (NVR) and 284–285 (GR).

It belongs to the aerobic coproporphyrinogen-III oxidase family. In terms of assembly, homodimer.

The enzyme catalyses coproporphyrinogen III + O2 + 2 H(+) = protoporphyrinogen IX + 2 CO2 + 2 H2O. Its pathway is porphyrin-containing compound metabolism; protoporphyrin-IX biosynthesis; protoporphyrinogen-IX from coproporphyrinogen-III (O2 route): step 1/1. In terms of biological role, involved in the heme biosynthesis. Catalyzes the aerobic oxidative decarboxylation of propionate groups of rings A and B of coproporphyrinogen-III to yield the vinyl groups in protoporphyrinogen-IX. In Dictyostelium discoideum (Social amoeba), this protein is Oxygen-dependent coproporphyrinogen-III oxidase (cpox).